A 459-amino-acid polypeptide reads, in one-letter code: Bifunctional protein GlmU (459 aa).

The segment at 1 to 229 (MTNYAIILAA…FDESLGVNDR (229 aa)) is pyrophosphorylase. UDP-N-acetyl-alpha-D-glucosamine-binding positions include 8–11 (LAAG), lysine 22, glutamine 72, and 77–78 (GT). Residue aspartate 102 participates in Mg(2+) binding. UDP-N-acetyl-alpha-D-glucosamine is bound by residues glycine 139, glutamate 154, asparagine 169, and asparagine 227. Position 227 (asparagine 227) interacts with Mg(2+). The interval 230–250 (VALATAESVMRRRINQKHMVN) is linker. The segment at 251 to 459 (GVSFVNPDAT…KRLPHHPQNK (209 aa)) is N-acetyltransferase. UDP-N-acetyl-alpha-D-glucosamine is bound by residues arginine 332 and lysine 350. Histidine 362 (proton acceptor) is an active-site residue. UDP-N-acetyl-alpha-D-glucosamine contacts are provided by tyrosine 365 and asparagine 376. Acetyl-CoA-binding positions include alanine 379, 385 to 386 (NY), serine 404, alanine 422, and arginine 439.

It in the N-terminal section; belongs to the N-acetylglucosamine-1-phosphate uridyltransferase family. This sequence in the C-terminal section; belongs to the transferase hexapeptide repeat family. In terms of assembly, homotrimer. Mg(2+) serves as cofactor.

Its subcellular location is the cytoplasm. It carries out the reaction alpha-D-glucosamine 1-phosphate + acetyl-CoA = N-acetyl-alpha-D-glucosamine 1-phosphate + CoA + H(+). The catalysed reaction is N-acetyl-alpha-D-glucosamine 1-phosphate + UTP + H(+) = UDP-N-acetyl-alpha-D-glucosamine + diphosphate. It participates in nucleotide-sugar biosynthesis; UDP-N-acetyl-alpha-D-glucosamine biosynthesis; N-acetyl-alpha-D-glucosamine 1-phosphate from alpha-D-glucosamine 6-phosphate (route II): step 2/2. The protein operates within nucleotide-sugar biosynthesis; UDP-N-acetyl-alpha-D-glucosamine biosynthesis; UDP-N-acetyl-alpha-D-glucosamine from N-acetyl-alpha-D-glucosamine 1-phosphate: step 1/1. It functions in the pathway bacterial outer membrane biogenesis; LPS lipid A biosynthesis. Catalyzes the last two sequential reactions in the de novo biosynthetic pathway for UDP-N-acetylglucosamine (UDP-GlcNAc). The C-terminal domain catalyzes the transfer of acetyl group from acetyl coenzyme A to glucosamine-1-phosphate (GlcN-1-P) to produce N-acetylglucosamine-1-phosphate (GlcNAc-1-P), which is converted into UDP-GlcNAc by the transfer of uridine 5-monophosphate (from uridine 5-triphosphate), a reaction catalyzed by the N-terminal domain. This chain is Bifunctional protein GlmU, found in Streptococcus gordonii (strain Challis / ATCC 35105 / BCRC 15272 / CH1 / DL1 / V288).